The chain runs to 166 residues: Protein-export protein SecB (166 aa).

Belongs to the SecB family. In terms of assembly, homotetramer, a dimer of dimers. One homotetramer interacts with 1 SecA dimer.

The protein resides in the cytoplasm. One of the proteins required for the normal export of preproteins out of the cell cytoplasm. It is a molecular chaperone that binds to a subset of precursor proteins, maintaining them in a translocation-competent state. It also specifically binds to its receptor SecA. The polypeptide is Protein-export protein SecB (Sinorhizobium fredii (strain NBRC 101917 / NGR234)).